The chain runs to 216 residues: Peroxiredoxin (216 aa).

The region spanning 2–158 (VVIGEKFPEV…ILRLVKALKI (157 aa)) is the Thioredoxin domain. The active-site Cysteine sulfenic acid (-SOH) intermediate is the Cys46. A substrate-binding site is contributed by Arg121. Cys205 and Cys211 are disulfide-bonded.

It belongs to the peroxiredoxin family. Prx6 subfamily. Homodecamer. Pentamer of dimers that assemble into a ring structure.

It is found in the cytoplasm. It catalyses the reaction a hydroperoxide + [thioredoxin]-dithiol = an alcohol + [thioredoxin]-disulfide + H2O. Its function is as follows. Thiol-specific peroxidase that catalyzes the reduction of hydrogen peroxide and organic hydroperoxides to water and alcohols, respectively. Plays a role in cell protection against oxidative stress by detoxifying peroxides. The chain is Peroxiredoxin from Pyrococcus abyssi (strain GE5 / Orsay).